Here is a 62-residue protein sequence, read N- to C-terminus: Sperm protamine P1 (62 aa).

A disordered region spans residues 1–62 (MARYRHSRSR…RYSRRRRRRY (62 aa)).

It belongs to the protamine P1 family. As to expression, testis.

The protein resides in the nucleus. It is found in the chromosome. Functionally, protamines substitute for histones in the chromatin of sperm during the haploid phase of spermatogenesis. They compact sperm DNA into a highly condensed, stable and inactive complex. In Notamacropus eugenii (Tammar wallaby), this protein is Sperm protamine P1 (PRM1).